We begin with the raw amino-acid sequence, 447 residues long: GTPase Der (447 aa).

EngA-type G domains follow at residues 3–167 (PVIA…FAER) and 181–354 (TRIA…AAAM). GTP is bound by residues 9–16 (GRPNVGKS), 56–60 (DTGGF), 119–122 (NKAE), 187–194 (GRPNVGKS), 234–238 (DTAGL), and 299–302 (NKWD). The 85-residue stretch at 355–439 (VKLPTPKLTR…PLRIEFRTNK (85 aa)) folds into the KH-like domain.

The protein belongs to the TRAFAC class TrmE-Era-EngA-EngB-Septin-like GTPase superfamily. EngA (Der) GTPase family. In terms of assembly, associates with the 50S ribosomal subunit.

Functionally, GTPase that plays an essential role in the late steps of ribosome biogenesis. The chain is GTPase Der from Ralstonia pickettii (strain 12J).